The following is a 145-amino-acid chain: Putative transcriptional regulatory protein PYRAB13000 (145 aa).

Belongs to the Tfx family.

Putative transcriptional regulator. This Pyrococcus abyssi (strain GE5 / Orsay) protein is Putative transcriptional regulatory protein PYRAB13000.